A 165-amino-acid polypeptide reads, in one-letter code: Deoxyuridine 5'-triphosphate nucleotidohydrolase (165 aa).

The protein belongs to the dUTPase family. In terms of assembly, homotrimer. Mg(2+) serves as cofactor.

The protein resides in the host cytoplasm. Its subcellular location is the virion. The catalysed reaction is dUTP + H2O = dUMP + diphosphate + H(+). In terms of biological role, the viral dUTPase may play a role in lowering the dUTP concentration in natural infections to minimize misincorporation of deoxyuridine into the viral DNA and ensure the fidelity of genome replication. This is Deoxyuridine 5'-triphosphate nucleotidohydrolase from African swine fever virus (isolate Tick/South Africa/Pretoriuskop Pr4/1996) (ASFV).